The sequence spans 608 residues: DNA mismatch repair protein MutL (608 aa).

Residues alanine 363–valine 397 form a disordered region. Basic and acidic residues predominate over residues arginine 369–proline 390.

This sequence belongs to the DNA mismatch repair MutL/HexB family.

Functionally, this protein is involved in the repair of mismatches in DNA. It is required for dam-dependent methyl-directed DNA mismatch repair. May act as a 'molecular matchmaker', a protein that promotes the formation of a stable complex between two or more DNA-binding proteins in an ATP-dependent manner without itself being part of a final effector complex. This chain is DNA mismatch repair protein MutL, found in Pelobacter propionicus (strain DSM 2379 / NBRC 103807 / OttBd1).